A 202-amino-acid chain; its full sequence is Na(+)-translocating NADH-quinone reductase subunit E (202 aa).

6 consecutive transmembrane segments (helical) span residues 11-31, 35-55, 81-101, 114-134, 144-164, and 180-200; these read AIFV…FLAI, IEAA…TVPV, FLGL…MEMV, GVFL…LFMV, LVYG…LAGI, and LGIT…FSGI.

Belongs to the NqrDE/RnfAE family. In terms of assembly, composed of six subunits; NqrA, NqrB, NqrC, NqrD, NqrE and NqrF.

The protein localises to the cell inner membrane. The catalysed reaction is a ubiquinone + n Na(+)(in) + NADH + H(+) = a ubiquinol + n Na(+)(out) + NAD(+). Functionally, NQR complex catalyzes the reduction of ubiquinone-1 to ubiquinol by two successive reactions, coupled with the transport of Na(+) ions from the cytoplasm to the periplasm. NqrA to NqrE are probably involved in the second step, the conversion of ubisemiquinone to ubiquinol. In Marinobacter nauticus (strain ATCC 700491 / DSM 11845 / VT8) (Marinobacter aquaeolei), this protein is Na(+)-translocating NADH-quinone reductase subunit E.